A 169-amino-acid polypeptide reads, in one-letter code: UPF0251 protein MM_2090 (169 aa).

The protein belongs to the UPF0251 family.

The polypeptide is UPF0251 protein MM_2090 (Methanosarcina mazei (strain ATCC BAA-159 / DSM 3647 / Goe1 / Go1 / JCM 11833 / OCM 88) (Methanosarcina frisia)).